The chain runs to 743 residues: MASKSRRLSGLEISLIVLFLLMTAVSVALITVLALKQESDKKEEVTPEEPSPSVTPPEKPYLIGVGRADCTGPVADLPMMGYANTDQTARGLHTRLFSRAFIVDDGNKRVVFVTSDIGMVSQRLRLEVFQALKEKYGDLYRQDNVVLSGTHTHSGVGGYFQYTLFMITSKGYIKPSIQAIVSGIVKSIDIAHRNLRPGRIFINKGQVADSNFNRSPHSYMNNPEEERNRYEFNTDKQIVVLKFTDLDGDGIGLLSWFAVHPVSMNYTNRMVSSDNLGYASYIFEQEKNIGFLPGEKGPFVAGFSSSNLGDSSPNIRGPVCVNTGLKCDYINSSCPVGGKKACIAFGPGEDMFESTRIIGENMFKIAKELYGSAKQELHGPVYGAHQWVNMTDETVQFNSTHTGRTCKPALGHSFAAGTTDGGGEFNFLQGDTEGDPFWDGIRDAVLGPPSNETKACHQPKPILFSTGEMDSPLPWHPAIVDVQIITIGSLAVVAVPGEFTTMSGRRIREAVKRELEVKEPFTNAEVVVAGLCNIYTHYITTYEEYQIQRYEGASTIFGPHTLSAYIQRYRGLAKAIAHGTIGELPKGPEPPFFDEDKLFNQVRDPVADVAPVGTTFGDVLQEVNPVYKVGEIASVTFVSGNPRHSGDIRDTTLVTVERFHNDTGSWEIIHNDASWETRFHWIKGLAGRSQAKVEWHIPQTAQAGTYQIQYFGHYKQTTENTTVITPYVGTSAAFKVARSFYYF.

Residues 1 to 14 (MASKSRRLSGLEIS) are Cytoplasmic-facing. The helical; Signal-anchor for type II membrane protein transmembrane segment at 15–35 (LIVLFLLMTAVSVALITVLAL) threads the bilayer. Residues 36–743 (KQESDKKEEV…FKVARSFYYF (708 aa)) lie on the Lumenal side of the membrane. Residues 40-60 (DKKEEVTPEEPSPSVTPPEKP) are disordered. Over residues 49–59 (EPSPSVTPPEK) the composition is skewed to pro residues. Histidine 151 and histidine 260 together coordinate Zn(2+). Residue asparagine 265 is glycosylated (N-linked (GlcNAc...) asparagine). Serine 312 acts as the Nucleophile in catalysis. 2 disulfide bridges follow: cysteine 320/cysteine 334 and cysteine 327/cysteine 342. Residues asparagine 331, asparagine 389, asparagine 398, and asparagine 451 are each glycosylated (N-linked (GlcNAc...) asparagine). Cysteine 406 and cysteine 456 are disulfide-bonded. Glutamate 498 and tyrosine 538 together coordinate Zn(2+). A glycan (N-linked (GlcNAc...) asparagine) is linked at asparagine 661. Positions 672, 674, and 677 each coordinate Ca(2+). The N-linked (GlcNAc...) asparagine glycan is linked to asparagine 720.

This sequence belongs to the neutral ceramidase family. Zn(2+) is required as a cofactor. Post-translationally, N-glycosylated. In terms of processing, O-glycosylated. Detected in intestine (at protein level).

It localises to the cell membrane. Its subcellular location is the membrane raft. The protein localises to the membrane. The protein resides in the caveola. It is found in the golgi apparatus membrane. It localises to the mitochondrion. Its subcellular location is the secreted. The protein localises to the extracellular exosome. It catalyses the reaction an N-acylsphing-4-enine + H2O = sphing-4-enine + a fatty acid. The enzyme catalyses N-dodecanoylsphing-4-enine + H2O = dodecanoate + sphing-4-enine. Its pathway is lipid metabolism; sphingolipid metabolism. Plasma membrane ceramidase that hydrolyzes sphingolipid ceramides into sphingosine and free fatty acids at neutral pH. Ceramides, sphingosine, and its phosphorylated form sphingosine-1-phosphate are bioactive lipids that mediate cellular signaling pathways regulating several biological processes including cell proliferation, apoptosis and differentiation. Also catalyzes the reverse reaction allowing the synthesis of ceramides from fatty acids and sphingosine. Together with sphingomyelinase, participates in the production of sphingosine and sphingosine-1-phosphate from the degradation of sphingomyelin, a sphingolipid enriched in the plasma membrane of cells. Also participates in the hydrolysis of ceramides from the extracellular milieu allowing the production of sphingosine-1-phosphate inside and outside cells. The protein is Neutral ceramidase (asah2) of Danio rerio (Zebrafish).